The primary structure comprises 165 residues: uncharacterized protein (165 aa).

The helical transmembrane segment at 10-27 threads the bilayer; the sequence is VSLTIVFVLFFSADVSLT.

The protein resides in the membrane. This is an uncharacterized protein from Saccharomyces cerevisiae (strain ATCC 204508 / S288c) (Baker's yeast).